The sequence spans 198 residues: Large ribosomal subunit protein bL25 (198 aa).

This sequence belongs to the bacterial ribosomal protein bL25 family. CTC subfamily. Part of the 50S ribosomal subunit; part of the 5S rRNA/L5/L18/L25 subcomplex. Contacts the 5S rRNA. Binds to the 5S rRNA independently of L5 and L18.

This is one of the proteins that binds to the 5S RNA in the ribosome where it forms part of the central protuberance. The protein is Large ribosomal subunit protein bL25 of Lysinibacillus sphaericus (strain C3-41).